Reading from the N-terminus, the 129-residue chain is Protein yippee-like At5g53940 (129 aa).

The 98-residue stretch at 12–109 (RSYRCRFCRT…LERGRIVDEI (98 aa)) folds into the Yippee domain. Zn(2+)-binding residues include C16, C19, C72, and C75.

The protein belongs to the yippee family.

The chain is Protein yippee-like At5g53940 from Arabidopsis thaliana (Mouse-ear cress).